The chain runs to 1009 residues: Protein WBSCR14 homolog (1009 aa).

4 disordered regions span residues 1-20 (MSRG…PHDD), 304-354 (MSLG…LHQM), 488-531 (NNQP…DPMM), and 686-728 (ILES…EQEA). Polar residues-rich tracts occupy residues 324–350 (RTPT…SSAS) and 499–508 (RSNLLPTQND). Over residues 511–526 (LPQFLQSTQPTPQPQS) the composition is skewed to low complexity. Polar residues predominate over residues 686–695 (ILESPSTSGD). The region spanning 803–856 (RKRILHLHAEQNRRSALKDGFDQLMDIIPDLYSGGVKPTNAVVLAKSADHIRRL) is the bHLH domain. The segment at 856–877 (LQAEKWDKTQKIDEAKAKIEKL) is leucine-zipper.

Expressed in intestine, neurons, muscle, hypodermis, excretory cell and other tissues.

The protein localises to the nucleus. Its subcellular location is the cytoplasm. The protein resides in the mitochondrion. Transcription factor that binds to the E box motif 5'-CACGTG-3', probably in a heterodimeric complex with mxl-2. Involved in modulating longevity in response to TOR signaling, dietary restriction, the decline in protein homeostasis associated with normal aging, germline signaling and the insulin-like signaling pathway. Plays a role in autophagy. Involved in regulating migration of the ray 1 precursor cells in the male tail, acting in concert with Wnt and semaphorin signaling pathways. Regulates transcription of genes encoding extracellular matrix (ECM) components which may contribute to the substratum required for migration of the neighboring ray 1 precursor cells. Involved in repressing infection by the microsporidian pathogen N.parisii, probably acting independently of its canonical partner, mxl-2. The polypeptide is Protein WBSCR14 homolog (mml-1) (Caenorhabditis elegans).